The primary structure comprises 205 residues: DNA-directed RNA polymerase subunit 5 (205 aa).

The protein belongs to the archaeal Rpo5/eukaryotic RPB5 RNA polymerase subunit family.

Its subcellular location is the virion. The enzyme catalyses RNA(n) + a ribonucleoside 5'-triphosphate = RNA(n+1) + diphosphate. Its function is as follows. DNA-dependent RNA polymerase catalyzes the transcription of DNA into RNA using the four ribonucleoside triphosphates as substrates. This Acanthamoeba polyphaga (Amoeba) protein is DNA-directed RNA polymerase subunit 5.